The following is a 166-amino-acid chain: Small ribosomal subunit protein uS5 (166 aa).

Residues 11 to 74 (FLEKLIAVNR…EKARRNMVDV (64 aa)) enclose the S5 DRBM domain.

Belongs to the universal ribosomal protein uS5 family. As to quaternary structure, part of the 30S ribosomal subunit. Contacts proteins S4 and S8.

In terms of biological role, with S4 and S12 plays an important role in translational accuracy. Functionally, located at the back of the 30S subunit body where it stabilizes the conformation of the head with respect to the body. This chain is Small ribosomal subunit protein uS5, found in Alteromonas mediterranea (strain DSM 17117 / CIP 110805 / LMG 28347 / Deep ecotype).